Consider the following 498-residue polypeptide: Glycerol kinase 1 (498 aa).

Threonine 12 contributes to the ADP binding site. ATP contacts are provided by threonine 12, threonine 13, and serine 14. Threonine 12 serves as a coordination point for sn-glycerol 3-phosphate. An ADP-binding site is contributed by arginine 16. Arginine 82, glutamate 83, tyrosine 134, and aspartate 243 together coordinate sn-glycerol 3-phosphate. Glycerol-binding residues include arginine 82, glutamate 83, tyrosine 134, aspartate 243, and glutamine 244. 2 residues coordinate ADP: threonine 265 and glycine 308. Residues threonine 265, glycine 308, glutamine 312, and glycine 409 each coordinate ATP. Glycine 409 and asparagine 413 together coordinate ADP.

Belongs to the FGGY kinase family. Homotetramer and homodimer (in equilibrium).

The catalysed reaction is glycerol + ATP = sn-glycerol 3-phosphate + ADP + H(+). Its pathway is polyol metabolism; glycerol degradation via glycerol kinase pathway; sn-glycerol 3-phosphate from glycerol: step 1/1. Its activity is regulated as follows. Activated by phosphorylation and inhibited by fructose 1,6-bisphosphate (FBP). Functionally, key enzyme in the regulation of glycerol uptake and metabolism. Catalyzes the phosphorylation of glycerol to yield sn-glycerol 3-phosphate. This is Glycerol kinase 1 from Clostridium tetani (strain Massachusetts / E88).